The primary structure comprises 177 residues: Large ribosomal subunit protein uL6 (177 aa).

Belongs to the universal ribosomal protein uL6 family. In terms of assembly, part of the 50S ribosomal subunit.

Its function is as follows. This protein binds to the 23S rRNA, and is important in its secondary structure. It is located near the subunit interface in the base of the L7/L12 stalk, and near the tRNA binding site of the peptidyltransferase center. This is Large ribosomal subunit protein uL6 from Bartonella quintana (strain Toulouse) (Rochalimaea quintana).